Consider the following 151-residue polypeptide: 1,4-dihydroxy-2-naphthoyl-CoA hydrolase (151 aa).

Aspartate 19 is a catalytic residue.

The protein belongs to the 4-hydroxybenzoyl-CoA thioesterase family. DHNA-CoA hydrolase subfamily.

The catalysed reaction is 1,4-dihydroxy-2-naphthoyl-CoA + H2O = 1,4-dihydroxy-2-naphthoate + CoA + H(+). It participates in cofactor biosynthesis; phylloquinone biosynthesis. The protein operates within quinol/quinone metabolism; 1,4-dihydroxy-2-naphthoate biosynthesis; 1,4-dihydroxy-2-naphthoate from chorismate: step 7/7. Functionally, catalyzes the hydrolysis of 1,4-dihydroxy-2-naphthoyl-CoA (DHNA-CoA) to 1,4-dihydroxy-2-naphthoate (DHNA), a reaction involved in phylloquinone (vitamin K1) biosynthesis. This Prochlorococcus marinus (strain MIT 9303) protein is 1,4-dihydroxy-2-naphthoyl-CoA hydrolase.